The primary structure comprises 166 residues: Mitochondrial translation release factor in rescue (166 aa).

The transit peptide at 1–35 (MSTVGLFHFPTPLTRICPAPWGLRLWEKLTLLSPG) directs the protein to the mitochondrion. A GGQ domain region spans residues 57 to 121 (ENELEEQFVK…LQEKVDVFYN (65 aa)). The GGQ signature appears at 71-73 (GGQ). Position 73 is an N5-methylglutamine (glutamine 73). The tract at residues 122 to 148 (GENSPVHKEKREAAKKKQERKKRAKET) is disordered. A compositionally biased stretch (basic and acidic residues) spans 126–137 (PVHKEKREAAKK). Residues 127–160 (VHKEKREAAKKKQERKKRAKETLEKKKLLKELWE) are a coiled coil.

Belongs to the prokaryotic/mitochondrial release factor family. As to quaternary structure, interacts (via C-terminus) with MTRES1 (via S4 domain). Associates with mitoribosomal S39 large subunit, peptidyl tRNA and nascent chain. Methylation of glutamine in the GGQ triplet by HEMK1. As to expression, expressed in all areas of the brain tested.

It localises to the mitochondrion. In terms of biological role, part of a mitoribosome-associated quality control pathway that prevents aberrant translation by responding to interruptions during elongation. As heterodimer with MTRES1, ejects the unfinished nascent chain and peptidyl transfer RNA (tRNA), respectively, from stalled ribosomes. Recruitment of mitoribosome biogenesis factors to these quality control intermediates suggests additional roles for MTRES1 and MTRF during mitoribosome rescue. The polypeptide is Mitochondrial translation release factor in rescue (Homo sapiens (Human)).